A 146-amino-acid polypeptide reads, in one-letter code: Ribonuclease H (146 aa).

The RNase H type-1 domain maps to 1–138 (MYAWTDGACR…ADALANRGID (138 aa)). Mg(2+)-binding residues include aspartate 6, glutamate 44, aspartate 66, and aspartate 130.

Belongs to the RNase H family. In terms of assembly, monomer. Requires Mg(2+) as cofactor.

The protein localises to the cytoplasm. It catalyses the reaction Endonucleolytic cleavage to 5'-phosphomonoester.. Its function is as follows. Endonuclease that specifically degrades the RNA of RNA-DNA hybrids. The sequence is that of Ribonuclease H from Alkalilimnicola ehrlichii (strain ATCC BAA-1101 / DSM 17681 / MLHE-1).